A 404-amino-acid polypeptide reads, in one-letter code: Cysteine desulfurase IscS (404 aa).

Residues 75-76, Asn-155, Gln-183, and 203-205 contribute to the pyridoxal 5'-phosphate site; these read AT and SGH. N6-(pyridoxal phosphate)lysine is present on Lys-206. Thr-243 serves as a coordination point for pyridoxal 5'-phosphate. Residue Cys-328 is the Cysteine persulfide intermediate of the active site. Cys-328 contributes to the [2Fe-2S] cluster binding site.

This sequence belongs to the class-V pyridoxal-phosphate-dependent aminotransferase family. NifS/IscS subfamily. Homodimer. Forms a heterotetramer with IscU, interacts with other sulfur acceptors. Pyridoxal 5'-phosphate is required as a cofactor.

The protein localises to the cytoplasm. The catalysed reaction is (sulfur carrier)-H + L-cysteine = (sulfur carrier)-SH + L-alanine. It participates in cofactor biosynthesis; iron-sulfur cluster biosynthesis. In terms of biological role, master enzyme that delivers sulfur to a number of partners involved in Fe-S cluster assembly, tRNA modification or cofactor biosynthesis. Catalyzes the removal of elemental sulfur atoms from cysteine to produce alanine. Functions as a sulfur delivery protein for Fe-S cluster synthesis onto IscU, an Fe-S scaffold assembly protein, as well as other S acceptor proteins. This is Cysteine desulfurase IscS from Shewanella baltica (strain OS223).